Consider the following 194-residue polypeptide: Xanthine phosphoribosyltransferase (194 aa).

Residues Leu-20 and Asn-27 each contribute to the xanthine site. 128-132 (ANGCA) contacts 5-phospho-alpha-D-ribose 1-diphosphate. Position 156 (Lys-156) interacts with xanthine.

This sequence belongs to the purine/pyrimidine phosphoribosyltransferase family. Xpt subfamily. In terms of assembly, homodimer.

It localises to the cytoplasm. It carries out the reaction XMP + diphosphate = xanthine + 5-phospho-alpha-D-ribose 1-diphosphate. Its pathway is purine metabolism; XMP biosynthesis via salvage pathway; XMP from xanthine: step 1/1. Its function is as follows. Converts the preformed base xanthine, a product of nucleic acid breakdown, to xanthosine 5'-monophosphate (XMP), so it can be reused for RNA or DNA synthesis. This chain is Xanthine phosphoribosyltransferase, found in Lachnoclostridium phytofermentans (strain ATCC 700394 / DSM 18823 / ISDg) (Clostridium phytofermentans).